We begin with the raw amino-acid sequence, 378 residues long: Chorismate synthase (378 aa).

NADP(+) contacts are provided by arginine 48 and arginine 54. FMN is bound by residues 125–127 (RSS), 238–239 (NA), glycine 278, 293–297 (KPTSS), and arginine 319.

This sequence belongs to the chorismate synthase family. Homotetramer. Requires FMNH2 as cofactor.

It carries out the reaction 5-O-(1-carboxyvinyl)-3-phosphoshikimate = chorismate + phosphate. It functions in the pathway metabolic intermediate biosynthesis; chorismate biosynthesis; chorismate from D-erythrose 4-phosphate and phosphoenolpyruvate: step 7/7. In terms of biological role, catalyzes the anti-1,4-elimination of the C-3 phosphate and the C-6 proR hydrogen from 5-enolpyruvylshikimate-3-phosphate (EPSP) to yield chorismate, which is the branch point compound that serves as the starting substrate for the three terminal pathways of aromatic amino acid biosynthesis. This reaction introduces a second double bond into the aromatic ring system. This chain is Chorismate synthase, found in Azoarcus sp. (strain BH72).